The primary structure comprises 226 residues: Endonuclease NucS (226 aa).

This sequence belongs to the NucS endonuclease family.

The protein resides in the cytoplasm. In terms of biological role, cleaves both 3' and 5' ssDNA extremities of branched DNA structures. This is Endonuclease NucS from Mycobacterium tuberculosis (strain ATCC 25618 / H37Rv).